The following is a 329-amino-acid chain: Ig gamma-2 chain C region (329 aa).

Cystine bridges form between Cys28-Cys79, Cys142-Cys202, and Cys248-Cys308. Asn178 is a glycosylation site (N-linked (GlcNAc...) asparagine).

The protein localises to the secreted. The sequence is that of Ig gamma-2 chain C region from Cavia porcellus (Guinea pig).